We begin with the raw amino-acid sequence, 692 residues long: Glycogen phosphorylase (692 aa).

An N6-(pyridoxal phosphate)lysine modification is found at K586.

Belongs to the glycogen phosphorylase family. Requires pyridoxal 5'-phosphate as cofactor.

It catalyses the reaction [(1-&gt;4)-alpha-D-glucosyl](n) + phosphate = [(1-&gt;4)-alpha-D-glucosyl](n-1) + alpha-D-glucose 1-phosphate. Functionally, phosphorylase is an important allosteric enzyme in carbohydrate metabolism. Enzymes from different sources differ in their regulatory mechanisms and in their natural substrates. However, all known phosphorylases share catalytic and structural properties. In Aquifex aeolicus (strain VF5), this protein is Glycogen phosphorylase (glgP).